We begin with the raw amino-acid sequence, 470 residues long: Transcription factor SOX-8 (470 aa).

Residues 1–12 (MLNMTEEHDKAL) show a composition bias toward basic and acidic residues. The disordered stretch occupies residues 1–60 (MLNMTEEHDKALEAPCSPAGTTSSMSHVDSDSDSPLSPAGSEGLGCAPAPAPRPPGAAPL). Residues 67–107 (AEVDERFPACIRDAVSQVLKGYDWSLVPMPVRGNGSLKAKP) are dimerization (DIM). The segment at residues 109–177 (VKRPMNAFMV…QHKKDHPDYK (69 aa)) is a DNA-binding region (HMG box). Composition is skewed to basic and acidic residues over residues 163–178 (ERLRVQHKKDHPDYKY), 219–228 (DGHHHGEHAG), and 242–257 (TDLHHGSKQELKHEGR). Disordered stretches follow at residues 163-257 (ERLR…HEGR) and 327-381 (AGGA…DYGS). The transactivation domain (TAM) stretch occupies residues 233–308 (PPTPPTTPKT…LNGHTAMPAD (76 aa)). Residues 338–349 (SPASASPSSADS) show a composition bias toward low complexity. Residues 353–470 (RPHIKTEQLS…QPVYTTLTRP (118 aa)) form a transactivation domain (TAC) region. Residues 359-372 (EQLSPSHYSDQSHG) are compositionally biased toward polar residues. A 9aaTAD motif is present at residues 424 to 432 (SSIYQYPYF).

Widely expressed in the embryo.

Its subcellular location is the nucleus. In terms of biological role, transcription factor that may play a role in central nervous system, limb and facial development. May be involved in male sex determination. Binds the consensus motif 5'-[AT][AT]CAA[AT]G-3'. This chain is Transcription factor SOX-8 (SOX8), found in Gallus gallus (Chicken).